The chain runs to 744 residues: Catalase-peroxidase (744 aa).

A cross-link (tryptophyl-tyrosyl-methioninium (Trp-Tyr) (with M-257)) is located at residues 108-231; that stretch reads WHSAGTYRIS…LAAVQMGLIY (124 aa). His109 acts as the Proton acceptor in catalysis. Positions 231-257 form a cross-link, tryptophyl-tyrosyl-methioninium (Tyr-Met) (with W-108); sequence YVNPEGPNGNPDPIAAARDIRETFRRM. His272 contributes to the heme b binding site. The tract at residues 353–372 is disordered; the sequence is ANQWKPKDGAGAGTVPDAHD.

The protein belongs to the peroxidase family. Peroxidase/catalase subfamily. In terms of assembly, homodimer or homotetramer. The cofactor is heme b. Formation of the three residue Trp-Tyr-Met cross-link is important for the catalase, but not the peroxidase activity of the enzyme.

The catalysed reaction is H2O2 + AH2 = A + 2 H2O. It carries out the reaction 2 H2O2 = O2 + 2 H2O. In terms of biological role, bifunctional enzyme with both catalase and broad-spectrum peroxidase activity. This Frankia casuarinae (strain DSM 45818 / CECT 9043 / HFP020203 / CcI3) protein is Catalase-peroxidase.